Reading from the N-terminus, the 1019-residue chain is Sca1 complex protein phr (1019 aa).

Disordered stretches follow at residues 89–118, 131–202, 265–287, and 512–546; these read IVIN…SSNF, AFNN…INNN, QQLN…NSAN, and STNN…TNNL. Over residues 93–102 the composition is skewed to low complexity; sequence SSSSSSSSSS. Residues 141-155 show a composition bias toward basic and acidic residues; it reads NRKEKEKDKDKDHQD. Residues 158–188 adopt a coiled-coil conformation; sequence NINNINNINNNINNNINNNNNNNNNNNNNNN. Residues 158-202 are compositionally biased toward low complexity; it reads NINNINNINNNINNNINNNNNNNNNNNNNNNMHNPTSSSPSINNN. One can recognise a PH domain in the interval 735 to 836; that stretch reads EIKKKGYLFK…WIKAIKFNCF (102 aa). The segment covering 860–872 has biased composition (low complexity); sequence VAGSGSNNGNNNG. Disordered regions lie at residues 860–890, 904–951, and 977–1019; these read VAGS…GSFI, NLSI…QQQL, and SSYT…SKLK. Residues 879 to 890 show a composition bias toward polar residues; the sequence is TTQQLNNSGSFI. The span at 977-986 shows a compositional bias: low complexity; the sequence is SSYTDSMSGS. Polar residues predominate over residues 987-1019; that stretch reads PPDSNGQVFPQSPQLKKTLFQRTTSFSKGSKLK.

Component of the Sca1 complex composed of at least gefA, gefH, scaA, phr, and the protein phosphatase 2A subunits pppA and pho2B. Interacts directly with gefH.

The protein resides in the cell membrane. Component of the Sca1 complex, a regulator of cell motility, chemotaxis and signal relay. The Sca1 complex is recruited to the plasma membrane in a chemoattractant- and F-actin-dependent manner and is enriched at the leading edge of chemotaxing cells where it regulates F-actin dynamics and signal relay by controlling the activation of rasC and the downstream target of rapamycin complex 2 (TORC2)-Akt/protein kinase B (PKB) pathway. In Dictyostelium discoideum (Social amoeba), this protein is Sca1 complex protein phr.